A 276-amino-acid chain; its full sequence is Diaminopimelate epimerase (276 aa).

Substrate is bound by residues N13, Q46, and N66. C75 functions as the Proton donor in the catalytic mechanism. Substrate-binding positions include 76–77 (GN), N159, N192, and 210–211 (ER). C219 (proton acceptor) is an active-site residue. 220–221 (GT) serves as a coordination point for substrate.

The protein belongs to the diaminopimelate epimerase family. Homodimer.

The protein resides in the cytoplasm. It carries out the reaction (2S,6S)-2,6-diaminopimelate = meso-2,6-diaminopimelate. It functions in the pathway amino-acid biosynthesis; L-lysine biosynthesis via DAP pathway; DL-2,6-diaminopimelate from LL-2,6-diaminopimelate: step 1/1. Catalyzes the stereoinversion of LL-2,6-diaminopimelate (L,L-DAP) to meso-diaminopimelate (meso-DAP), a precursor of L-lysine and an essential component of the bacterial peptidoglycan. In Stutzerimonas stutzeri (strain A1501) (Pseudomonas stutzeri), this protein is Diaminopimelate epimerase.